A 557-amino-acid polypeptide reads, in one-letter code: Eudesmanediol synthase (557 aa).

Mg(2+)-binding residues include Asp310 and Asp314. Asp310, Asp314, and Arg450 together coordinate substrate. The DDXXD motif signature appears at 310–314 (DDTFD). Mg(2+) is bound by residues Asn453 and Ser457.

The protein belongs to the terpene synthase family. As to quaternary structure, monomer. Mg(2+) serves as cofactor. Mn(2+) is required as a cofactor.

Its subcellular location is the cytoplasm. It carries out the reaction (2E,6E)-farnesyl diphosphate + 2 H2O = 7-epi-ent-eudesmane-5,11-diol + diphosphate. It functions in the pathway secondary metabolite biosynthesis; terpenoid biosynthesis. Its function is as follows. Component of the volatile terpenes biosynthesis pathways. Dihydroxylated sesquiterpenoid synthase that generates dually hydroxylated products directly from (E,E)-farnesyl diphosphate, primarily eudesmane-2,11-diol, along with two closely related structural isomers. In Zea mays (Maize), this protein is Eudesmanediol synthase.